We begin with the raw amino-acid sequence, 173 residues long: Photosystem I assembly protein Ycf3 (173 aa).

TPR repeat units follow at residues 35–68 (AYVYYRDGLSAQNDGDYAEALENYEESLKLEENA), 72–105 (GETLKNIAIIYMSNGEEERALETYQKALDENPKQ), and 120–153 (GRTAEEEGRRDDADGWFDQAANVWTQAVRLNPGG).

This sequence belongs to the Ycf3 family.

It is found in the cellular thylakoid membrane. In terms of biological role, essential for the assembly of the photosystem I (PSI) complex. May act as a chaperone-like factor to guide the assembly of the PSI subunits. In Synechococcus sp. (strain CC9311), this protein is Photosystem I assembly protein Ycf3.